The primary structure comprises 492 residues: Ketol-acid reductoisomerase (NADP(+)) (492 aa).

The 194-residue stretch at Ala15–Ser208 folds into the KARI N-terminal Rossmann domain. Residues Cys45–Gln48, Arg68, Arg76, Ser78, and Asp108–Gln110 contribute to the NADP(+) site. Residue His132 is part of the active site. Position 158 (Gly158) interacts with NADP(+). 2 KARI C-terminal knotted domains span residues Ser209–Thr353 and Tyr354–Met486. 4 residues coordinate Mg(2+): Asp217, Glu221, Glu389, and Glu393. Ser414 lines the substrate pocket.

Belongs to the ketol-acid reductoisomerase family. Mg(2+) serves as cofactor.

The enzyme catalyses (2R)-2,3-dihydroxy-3-methylbutanoate + NADP(+) = (2S)-2-acetolactate + NADPH + H(+). It catalyses the reaction (2R,3R)-2,3-dihydroxy-3-methylpentanoate + NADP(+) = (S)-2-ethyl-2-hydroxy-3-oxobutanoate + NADPH + H(+). Its pathway is amino-acid biosynthesis; L-isoleucine biosynthesis; L-isoleucine from 2-oxobutanoate: step 2/4. The protein operates within amino-acid biosynthesis; L-valine biosynthesis; L-valine from pyruvate: step 2/4. Involved in the biosynthesis of branched-chain amino acids (BCAA). Catalyzes an alkyl-migration followed by a ketol-acid reduction of (S)-2-acetolactate (S2AL) to yield (R)-2,3-dihydroxy-isovalerate. In the isomerase reaction, S2AL is rearranged via a Mg-dependent methyl migration to produce 3-hydroxy-3-methyl-2-ketobutyrate (HMKB). In the reductase reaction, this 2-ketoacid undergoes a metal-dependent reduction by NADPH to yield (R)-2,3-dihydroxy-isovalerate. In Shewanella oneidensis (strain ATCC 700550 / JCM 31522 / CIP 106686 / LMG 19005 / NCIMB 14063 / MR-1), this protein is Ketol-acid reductoisomerase (NADP(+)).